The sequence spans 123 residues: Small ribosomal subunit protein uS12cz/uS12cy (123 aa).

This sequence belongs to the universal ribosomal protein uS12 family. In terms of assembly, part of the 30S ribosomal subunit.

The protein localises to the plastid. It is found in the chloroplast. In terms of biological role, with S4 and S5 plays an important role in translational accuracy. Located at the interface of the 30S and 50S subunits. This Psilotum nudum (Whisk fern) protein is Small ribosomal subunit protein uS12cz/uS12cy (rps12-A).